The following is an 88-amino-acid chain: Elongation factor 1-beta (88 aa).

The protein belongs to the EF-1-beta/EF-1-delta family.

Promotes the exchange of GDP for GTP in EF-1-alpha/GDP, thus allowing the regeneration of EF-1-alpha/GTP that could then be used to form the ternary complex EF-1-alpha/GTP/AAtRNA. The polypeptide is Elongation factor 1-beta (ef1b) (Thermoplasma volcanium (strain ATCC 51530 / DSM 4299 / JCM 9571 / NBRC 15438 / GSS1)).